A 302-amino-acid chain; its full sequence is Sulfate adenylyltransferase subunit 2 (302 aa).

The tract at residues 280–302 is disordered; sequence RQGRAIDHDQSGSMELKKRQGYF.

Belongs to the PAPS reductase family. CysD subfamily. As to quaternary structure, heterodimer composed of CysD, the smaller subunit, and CysN.

The catalysed reaction is sulfate + ATP + H(+) = adenosine 5'-phosphosulfate + diphosphate. It participates in sulfur metabolism; hydrogen sulfide biosynthesis; sulfite from sulfate: step 1/3. In terms of biological role, with CysN forms the ATP sulfurylase (ATPS) that catalyzes the adenylation of sulfate producing adenosine 5'-phosphosulfate (APS) and diphosphate, the first enzymatic step in sulfur assimilation pathway. APS synthesis involves the formation of a high-energy phosphoric-sulfuric acid anhydride bond driven by GTP hydrolysis by CysN coupled to ATP hydrolysis by CysD. The polypeptide is Sulfate adenylyltransferase subunit 2 (Vibrio vulnificus (strain CMCP6)).